Here is a 146-residue protein sequence, read N- to C-terminus: Small ribosomal subunit protein uS5 (146 aa).

The S5 DRBM domain maps to Phe8 to Val71.

Belongs to the universal ribosomal protein uS5 family. In terms of assembly, part of the 30S ribosomal subunit. Contacts proteins S4 and S8.

Functionally, with S4 and S12 plays an important role in translational accuracy. Its function is as follows. Located at the back of the 30S subunit body where it stabilizes the conformation of the head with respect to the body. This is Small ribosomal subunit protein uS5 from Aliarcobacter butzleri (strain RM4018) (Arcobacter butzleri).